The following is a 310-amino-acid chain: MSEQQTVSQKEQYNLNKLQKRLRRNVGQAIADFNMIEEGDRIMVCLSGGKDSYTMLEILRNLQQSAPVNFSLVAVNLDQKQPGFPEHILPAYLESLGVEYQIVEENTYSIVKDKIPEGKTTCSLCSRLRRGILYRTATELGATKIALGHHRDDILQTLFLNMFYGGKLKGMPPKLMSDDGKHVVIRPLAYCREKDIERFSVAKGFPIIPCNLCGSQPNLQRQVIGDMLRDWDKRYPGRLETMFSAMQNVVPSHLSDYNLFDFKGIHHGSEVVDGGDLAFDREDIPMQPIGWQPEDADDAAPVRLDVLEIK.

Positions 47–52 (SGGKDS) match the PP-loop motif motif. [4Fe-4S] cluster is bound by residues C122, C125, and C213.

It belongs to the TtcA family. Homodimer. Mg(2+) serves as cofactor. [4Fe-4S] cluster is required as a cofactor.

The protein localises to the cytoplasm. It catalyses the reaction cytidine(32) in tRNA + S-sulfanyl-L-cysteinyl-[cysteine desulfurase] + AH2 + ATP = 2-thiocytidine(32) in tRNA + L-cysteinyl-[cysteine desulfurase] + A + AMP + diphosphate + H(+). It functions in the pathway tRNA modification. In terms of biological role, catalyzes the ATP-dependent 2-thiolation of cytidine in position 32 of tRNA, to form 2-thiocytidine (s(2)C32). The sulfur atoms are provided by the cysteine/cysteine desulfurase (IscS) system. The protein is tRNA-cytidine(32) 2-sulfurtransferase of Serratia proteamaculans (strain 568).